A 170-amino-acid polypeptide reads, in one-letter code: Adenine phosphoribosyltransferase (170 aa).

Belongs to the purine/pyrimidine phosphoribosyltransferase family. As to quaternary structure, homodimer.

It localises to the cytoplasm. It carries out the reaction AMP + diphosphate = 5-phospho-alpha-D-ribose 1-diphosphate + adenine. It functions in the pathway purine metabolism; AMP biosynthesis via salvage pathway; AMP from adenine: step 1/1. Functionally, catalyzes a salvage reaction resulting in the formation of AMP, that is energically less costly than de novo synthesis. The protein is Adenine phosphoribosyltransferase of Symbiobacterium thermophilum (strain DSM 24528 / JCM 14929 / IAM 14863 / T).